The primary structure comprises 349 residues: Isopentenyl-diphosphate delta-isomerase (349 aa).

Substrate is bound at residue 9-10 (RK). FMN contacts are provided by residues 65–67 (AMT), S95, and N124. 95-97 (STH) is a binding site for substrate. Q154 is a substrate binding site. Mg(2+) is bound at residue E155. Residues K186, S211, T216, 262-264 (GLR), and 283-284 (SR) contribute to the FMN site.

Belongs to the IPP isomerase type 2 family. In terms of assembly, homooctamer. Dimer of tetramers. FMN is required as a cofactor. NADPH serves as cofactor. Requires Mg(2+) as cofactor.

The protein resides in the cytoplasm. It carries out the reaction isopentenyl diphosphate = dimethylallyl diphosphate. In terms of biological role, involved in the biosynthesis of isoprenoids. Catalyzes the 1,3-allylic rearrangement of the homoallylic substrate isopentenyl (IPP) to its allylic isomer, dimethylallyl diphosphate (DMAPP). This is Isopentenyl-diphosphate delta-isomerase from Staphylococcus aureus (strain JH1).